The primary structure comprises 348 residues: Eukaryotic translation initiation factor 3 subunit H (348 aa).

The MPN domain maps to 35-169; that stretch reads VQIDGLVVLK…LKAYRLTPKL (135 aa). The span at 267-285 shows a compositional bias: low complexity; that stretch reads QQQKHQYQQRRQQENIQRQ. Positions 267–311 are disordered; sequence QQQKHQYQQRRQQENIQRQSRGEPPLPEEDINKLFKPPQPPPRME.

The protein belongs to the eIF-3 subunit H family. As to quaternary structure, component of the eukaryotic translation initiation factor 3 (eIF-3) complex, which is composed of 13 subunits: EIF3A, EIF3B, EIF3C, EIF3D, EIF3E, EIF3F, EIF3G, EIF3H, EIF3I, EIF3J, EIF3K, EIF3L and EIF3M.

The protein resides in the cytoplasm. Component of the eukaryotic translation initiation factor 3 (eIF-3) complex, which is involved in protein synthesis of a specialized repertoire of mRNAs and, together with other initiation factors, stimulates binding of mRNA and methionyl-tRNAi to the 40S ribosome. The eIF-3 complex specifically targets and initiates translation of a subset of mRNAs involved in cell proliferation. The sequence is that of Eukaryotic translation initiation factor 3 subunit H from Taeniopygia guttata (Zebra finch).